The following is a 320-amino-acid chain: Flavonol 4'-sulfotransferase (320 aa).

69 to 74 contributes to the 3'-phosphoadenylyl sulfate binding site; that stretch reads KSGTTW. The Proton acceptor role is filled by H129. 3'-phosphoadenylyl sulfate is bound by residues R151, S159, Y217, and 285 to 287; that span reads RKA.

It belongs to the sulfotransferase 1 family. In terms of tissue distribution, highest in shoot tips and lowest in mature leaves and roots.

It localises to the cytoplasm. The catalysed reaction is quercetin 3-sulfate + 3'-phosphoadenylyl sulfate = quercetin 3,4'-bissulfate + adenosine 3',5'-bisphosphate + H(+). With respect to regulation, no requirement for divalent cations and insensitive to p-chloromercuribenzoate, iodoacetate, or iodoacetamide. In terms of biological role, sulfotransferase that utilizes 3'-phospho-5'-adenylyl sulfate (PAPS) as sulfonate donor to catalyze the sulfate conjugation of quercetin 3-sulfate &gt; kaempferol 3-sulfate &gt; isorhamnetin 3-sulfate &gt; patuletin 3-sulfate, but not tamarixetin 3-sulfate. O-sulfation of position 4' of flavonol. May play a role in auxin transport. The protein is Flavonol 4'-sulfotransferase of Flaveria chlorifolia (Clasping yellowtops).